The primary structure comprises 250 residues: UPF0736 protein YjbA (250 aa).

It belongs to the UPF0736 family.

This chain is UPF0736 protein YjbA (yjbA), found in Bacillus subtilis (strain 168).